The sequence spans 492 residues: Probable G-protein coupled receptor Mth-like 8 (492 aa).

The signal sequence occupies residues 1–21; sequence MAQFCILGVLLILSGTHCSWG. The Extracellular portion of the chain corresponds to 22–218; the sequence is FHEETHYPCA…FVLGVREWTY (197 aa). Intrachain disulfides connect Cys30–Cys82, Cys84–Cys89, Cys93–Cys184, and Cys94–Cys107. Residues Asn37 and Asn51 are each glycosylated (N-linked (GlcNAc...) asparagine). N-linked (GlcNAc...) asparagine glycosylation is found at Asn129, Asn169, and Asn192. A helical transmembrane segment spans residues 219–239; that stretch reads AICLLIAILSMFIVLMVYLMC. Topologically, residues 240–245 are cytoplasmic; it reads SEMRNS. The chain crosses the membrane as a helical span at residues 246–266; that stretch reads FYGVAIKAYAICMILGYALLA. Over 267-282 the chain is Extracellular; it reads YLTLHNPANLSNAACR. Residue Asn275 is glycosylated (N-linked (GlcNAc...) asparagine). The chain crosses the membrane as a helical span at residues 283 to 303; the sequence is ILPSLALMNLVLSFYILSFIA. Residues 304-317 lie on the Cytoplasmic side of the membrane; it reads FKLYLSFYGVVFTK. Residues 318-338 traverse the membrane as a helical segment; sequence LMFWLIFTPIVLVAVGWSFFV. Over 339-362 the chain is Extracellular; the sequence is GFSYYGSRLIFGGDTCWFDPRNWS. N-linked (GlcNAc...) asparagine glycosylation occurs at Asn360. Residues 363 to 383 form a helical membrane-spanning segment; the sequence is VMIYFYAPVFVACAISGFFYV. Topologically, residues 384 to 411 are cytoplasmic; sequence LSQIYIRDQPDIETEKSFESIEKNRFKS. Residues 412–432 traverse the membrane as a helical segment; it reads FWKYFGYTAVVWVVCICSFAF. Residues 433–441 are Extracellular-facing; sequence NYYWENRSH. The N-linked (GlcNAc...) asparagine glycan is linked to Asn438. The helical transmembrane segment at 442 to 462 threads the bilayer; that stretch reads LNYAVSFCMAFHGFAALYALI. The Cytoplasmic portion of the chain corresponds to 463 to 492; the sequence is GKNQQIQNFLRRIDNGEDTCENSVPLSSFG.

This sequence belongs to the G-protein coupled receptor 2 family. Mth subfamily.

It is found in the cell membrane. The polypeptide is Probable G-protein coupled receptor Mth-like 8 (mthl8) (Drosophila melanogaster (Fruit fly)).